The sequence spans 553 residues: Dihydroxy-acid dehydratase (553 aa).

Residue Asp-78 coordinates Mg(2+). Residue Cys-119 coordinates [2Fe-2S] cluster. Mg(2+) contacts are provided by Asp-120 and Lys-121. N6-carboxylysine is present on Lys-121. A [2Fe-2S] cluster-binding site is contributed by Cys-191. Glu-444 serves as a coordination point for Mg(2+). Catalysis depends on Ser-470, which acts as the Proton acceptor.

Belongs to the IlvD/Edd family. In terms of assembly, homodimer. [2Fe-2S] cluster is required as a cofactor. Requires Mg(2+) as cofactor.

It catalyses the reaction (2R)-2,3-dihydroxy-3-methylbutanoate = 3-methyl-2-oxobutanoate + H2O. It carries out the reaction (2R,3R)-2,3-dihydroxy-3-methylpentanoate = (S)-3-methyl-2-oxopentanoate + H2O. The protein operates within amino-acid biosynthesis; L-isoleucine biosynthesis; L-isoleucine from 2-oxobutanoate: step 3/4. It participates in amino-acid biosynthesis; L-valine biosynthesis; L-valine from pyruvate: step 3/4. Functions in the biosynthesis of branched-chain amino acids. Catalyzes the dehydration of (2R,3R)-2,3-dihydroxy-3-methylpentanoate (2,3-dihydroxy-3-methylvalerate) into 2-oxo-3-methylpentanoate (2-oxo-3-methylvalerate) and of (2R)-2,3-dihydroxy-3-methylbutanoate (2,3-dihydroxyisovalerate) into 2-oxo-3-methylbutanoate (2-oxoisovalerate), the penultimate precursor to L-isoleucine and L-valine, respectively. This Methanococcoides burtonii (strain DSM 6242 / NBRC 107633 / OCM 468 / ACE-M) protein is Dihydroxy-acid dehydratase.